Consider the following 228-residue polypeptide: ATP-dependent dethiobiotin synthetase BioD (228 aa).

13–18 (DIGKTF) is an ATP binding site. Thr17 lines the Mg(2+) pocket. The active site involves Lys38. Ser42 is a binding site for substrate. Residues Asp55, 116–119 (EGSG), 179–180 (NK), and 208–210 (PKI) each bind ATP. Mg(2+) contacts are provided by Asp55 and Glu116.

Belongs to the dethiobiotin synthetase family. As to quaternary structure, homodimer. The cofactor is Mg(2+).

Its subcellular location is the cytoplasm. It carries out the reaction (7R,8S)-7,8-diammoniononanoate + CO2 + ATP = (4R,5S)-dethiobiotin + ADP + phosphate + 3 H(+). It functions in the pathway cofactor biosynthesis; biotin biosynthesis; biotin from 7,8-diaminononanoate: step 1/2. Functionally, catalyzes a mechanistically unusual reaction, the ATP-dependent insertion of CO2 between the N7 and N8 nitrogen atoms of 7,8-diaminopelargonic acid (DAPA, also called 7,8-diammoniononanoate) to form a ureido ring. The polypeptide is ATP-dependent dethiobiotin synthetase BioD (Clostridium perfringens (strain ATCC 13124 / DSM 756 / JCM 1290 / NCIMB 6125 / NCTC 8237 / Type A)).